Reading from the N-terminus, the 179-residue chain is Acireductone dioxygenase (179 aa).

Residues H88, H90, E94, and H133 each coordinate Fe(2+). H88, H90, E94, and H133 together coordinate Ni(2+).

Belongs to the acireductone dioxygenase (ARD) family. In terms of assembly, monomer. Interacts with MMP14. Fe(2+) serves as cofactor. The cofactor is Ni(2+).

Its subcellular location is the cytoplasm. It is found in the nucleus. The protein resides in the cell membrane. The enzyme catalyses 1,2-dihydroxy-5-(methylsulfanyl)pent-1-en-3-one + O2 = 4-methylsulfanyl-2-oxobutanoate + formate + 2 H(+). It carries out the reaction 1,2-dihydroxy-5-(methylsulfanyl)pent-1-en-3-one + O2 = 3-(methylsulfanyl)propanoate + CO + formate + 2 H(+). It participates in amino-acid biosynthesis; L-methionine biosynthesis via salvage pathway; L-methionine from S-methyl-5-thio-alpha-D-ribose 1-phosphate: step 5/6. In terms of biological role, catalyzes 2 different reactions between oxygen and the acireductone 1,2-dihydroxy-3-keto-5-methylthiopentene (DHK-MTPene) depending upon the metal bound in the active site. Fe-containing acireductone dioxygenase (Fe-ARD) produces formate and 2-keto-4-methylthiobutyrate (KMTB), the alpha-ketoacid precursor of methionine in the methionine recycle pathway. Ni-containing acireductone dioxygenase (Ni-ARD) produces methylthiopropionate, carbon monoxide and formate, and does not lie on the methionine recycle pathway. This chain is Acireductone dioxygenase (adi1), found in Xenopus laevis (African clawed frog).